The primary structure comprises 566 residues: Hemocyanin B chain (566 aa).

A disulfide bridge connects residues cysteine 82 and cysteine 87. Residues histidine 183, histidine 187, histidine 213, histidine 309, histidine 313, and histidine 347 each contribute to the Cu cation site.

This sequence belongs to the tyrosinase family. Hemocyanin subfamily. Hemolymph.

It is found in the secreted. It localises to the extracellular space. Functionally, hemocyanins are copper-containing oxygen carriers occurring freely dissolved in the hemolymph of many mollusks and arthropods. This Astacus leptodactylus (Turkish narrow-clawed crayfish) protein is Hemocyanin B chain.